The sequence spans 272 residues: 2-amino-3,7-dideoxy-D-threo-hept-6-ulosonate synthase (272 aa).

Asp-33 (proton acceptor) is an active-site residue. Residues 33–37 and 153–155 each bind 1-deoxy-D-threo-hexo-2,5-diulose 6-phosphate; these read DHGVS and YPR. The active-site Proton donor is the Tyr-153. The active-site Schiff-base intermediate with substrate is the Lys-184. 1-deoxy-D-threo-hexo-2,5-diulose 6-phosphate is bound by residues 209 to 210 and 237 to 238; these read GG and GR.

The protein belongs to the DeoC/FbaB aldolase family. ADHS subfamily. As to quaternary structure, homodecamer.

The catalysed reaction is 1-deoxy-D-threo-hexo-2,5-diulose 6-phosphate + L-aspartate 4-semialdehyde = 2,3-dioxopropyl phosphate + 2-amino-2,3,7-trideoxy-D-lyxo-hept-6-ulosonate. Its function is as follows. Catalyzes a transaldol reaction between 6-deoxy-5-ketofructose 1-phosphate (DKFP) and L-aspartate semialdehyde (ASA) with an elimination of hydroxypyruvaldehyde phosphate to yield 2-amino-3,7-dideoxy-D-threo-hept-6-ulosonate (ADH). Plays a key role in an alternative pathway of the biosynthesis of 3-dehydroquinate (DHQ), which is involved in the canonical pathway for the biosynthesis of aromatic amino acids. This is 2-amino-3,7-dideoxy-D-threo-hept-6-ulosonate synthase from Methanococcus vannielii (strain ATCC 35089 / DSM 1224 / JCM 13029 / OCM 148 / SB).